Here is a 188-residue protein sequence, read N- to C-terminus: dCTP deaminase (188 aa).

DCTP contacts are provided by residues 111–116 (KSTYAR), 135–137 (TLE), Gln156, Tyr170, Lys179, and Gln180. The active-site Proton donor/acceptor is the Glu137.

It belongs to the dCTP deaminase family. As to quaternary structure, homotrimer.

It catalyses the reaction dCTP + H2O + H(+) = dUTP + NH4(+). Its pathway is pyrimidine metabolism; dUMP biosynthesis; dUMP from dCTP (dUTP route): step 1/2. Catalyzes the deamination of dCTP to dUTP. The chain is dCTP deaminase from Rickettsia akari (strain Hartford).